The primary structure comprises 341 residues: Arfaptin-2 (341 aa).

Residues 46–84 are disordered; the sequence is NETSIVSGGYGGSGDGLIPTGSGRHPSHSTSPSGPGDEV. Positions 65-81 are enriched in low complexity; the sequence is TGSGRHPSHSTSPSGPG. Residue Ser-72 is modified to Phosphoserine. One can recognise an AH domain in the interval 121–321; sequence TVDLELELQI…NQKQLEQTLQ (201 aa).

Forms homodimers or heterodimers with ARFIP1. Interacts with RAC1. Specifically binds to GTP-bound ARF1 and ARF6, but binds to RAC1.GTP and RAC1.GDP with similar affinities. Interacts with ARL1. Interacts (via N-terminus) with IKBKB and IKBKG; these interactions inhibit activation of NF-kappa-B.

The protein resides in the golgi apparatus. It localises to the trans-Golgi network membrane. Its function is as follows. Plays a role in constitutive metalloproteinase (MMP) secretion from the trans Golgi network. May have important functions during vesicle biogenesis at certain cargo subdomains, which could be predominantly utilized by secreted MMPs, such as MMP7 and MMP2. Also involved in autophagy by regulating the starvation-dependent trafficking of ATG9A vesicles which deliver the phosphatidylinositol 4-kinase beta (PI4KB) to the autophagosome initiation site. Involved in phagophore growth during mitophagy by regulating ATG9A trafficking to mitochondria. In addition, plays a role in NF-kappa-B inhibition by interacting with IKBKB and IKBKG. This is Arfaptin-2 from Mus musculus (Mouse).